A 234-amino-acid polypeptide reads, in one-letter code: Phosphoribosylaminoimidazole-succinocarboxamide synthase (234 aa).

This sequence belongs to the SAICAR synthetase family.

The catalysed reaction is 5-amino-1-(5-phospho-D-ribosyl)imidazole-4-carboxylate + L-aspartate + ATP = (2S)-2-[5-amino-1-(5-phospho-beta-D-ribosyl)imidazole-4-carboxamido]succinate + ADP + phosphate + 2 H(+). Its pathway is purine metabolism; IMP biosynthesis via de novo pathway; 5-amino-1-(5-phospho-D-ribosyl)imidazole-4-carboxamide from 5-amino-1-(5-phospho-D-ribosyl)imidazole-4-carboxylate: step 1/2. The protein is Phosphoribosylaminoimidazole-succinocarboxamide synthase (purC) of Pyrococcus abyssi (strain GE5 / Orsay).